Reading from the N-terminus, the 344-residue chain is MERIVTPAEMFEDGNSELSLRPQKINEYIGQDKVKERLNIFIKAARNRKEALDHVLLYGPPGLGKTTLANIIAKEMTGDLKITSGPAIERAGDLAAILTTLKDYDVLFIDEIHRLNRSVEEILYPAMEDYALDIVIGKGAAAKSIRLDLPKFTLIGATTRIGMLTSPLRDRFGVLCAMEYYDETQLKEIVIRSAAVFGCKITEEGALEIASRSRGTPRIANRLLKRVRDYSEVKSNKVISLKEARDALELLEVDNQGFDKVDNKILEAIIDNFNGGPVGIETLSYFIGEELGTIEDVYEPYLLQKGFIVRTPRGRIASDKAYKHLGRVNNKNNNSNKGQTSFFK.

The large ATPase domain (RuvB-L) stretch occupies residues 1–181; it reads MERIVTPAEM…FGVLCAMEYY (181 aa). ATP-binding positions include leucine 20, arginine 21, glycine 62, lysine 65, threonine 66, threonine 67, 128 to 130, arginine 171, tyrosine 181, and arginine 218; that span reads EDY. Threonine 66 provides a ligand contact to Mg(2+). Residues 182-252 form a small ATPAse domain (RuvB-S) region; that stretch reads DETQLKEIVI…EARDALELLE (71 aa). The head domain (RuvB-H) stretch occupies residues 255–344; the sequence is NQGFDKVDNK…SNKGQTSFFK (90 aa). Arginine 310 and arginine 315 together coordinate DNA.

Belongs to the RuvB family. Homohexamer. Forms an RuvA(8)-RuvB(12)-Holliday junction (HJ) complex. HJ DNA is sandwiched between 2 RuvA tetramers; dsDNA enters through RuvA and exits via RuvB. An RuvB hexamer assembles on each DNA strand where it exits the tetramer. Each RuvB hexamer is contacted by two RuvA subunits (via domain III) on 2 adjacent RuvB subunits; this complex drives branch migration. In the full resolvosome a probable DNA-RuvA(4)-RuvB(12)-RuvC(2) complex forms which resolves the HJ.

Its subcellular location is the cytoplasm. It carries out the reaction ATP + H2O = ADP + phosphate + H(+). The RuvA-RuvB-RuvC complex processes Holliday junction (HJ) DNA during genetic recombination and DNA repair, while the RuvA-RuvB complex plays an important role in the rescue of blocked DNA replication forks via replication fork reversal (RFR). RuvA specifically binds to HJ cruciform DNA, conferring on it an open structure. The RuvB hexamer acts as an ATP-dependent pump, pulling dsDNA into and through the RuvAB complex. RuvB forms 2 homohexamers on either side of HJ DNA bound by 1 or 2 RuvA tetramers; 4 subunits per hexamer contact DNA at a time. Coordinated motions by a converter formed by DNA-disengaged RuvB subunits stimulates ATP hydrolysis and nucleotide exchange. Immobilization of the converter enables RuvB to convert the ATP-contained energy into a lever motion, pulling 2 nucleotides of DNA out of the RuvA tetramer per ATP hydrolyzed, thus driving DNA branch migration. The RuvB motors rotate together with the DNA substrate, which together with the progressing nucleotide cycle form the mechanistic basis for DNA recombination by continuous HJ branch migration. Branch migration allows RuvC to scan DNA until it finds its consensus sequence, where it cleaves and resolves cruciform DNA. In Clostridium botulinum (strain Eklund 17B / Type B), this protein is Holliday junction branch migration complex subunit RuvB.